Reading from the N-terminus, the 134-residue chain is Profilin (134 aa).

It belongs to the profilin family. As to quaternary structure, occurs in many kinds of cells as a complex with monomeric actin in a 1:1 ratio.

Its subcellular location is the cytoplasm. The protein resides in the cytoskeleton. Binds to actin and affects the structure of the cytoskeleton. At high concentrations, profilin prevents the polymerization of actin, whereas it enhances it at low concentrations. By binding to PIP2, it inhibits the formation of IP3 and DG. This Apium graveolens (Celery) protein is Profilin.